The following is a 335-amino-acid chain: MSLDIDQIALHQLIKRDEQNLELVLRESLLEPNATVVEMMAELHRVYSAKSKAYGLFNEESELAQALRLQRQGEEEFLAFSRAATGRLRDELAKYPFAEGGIVLFCQYRYLAVEYLLVAVLNNLSSMRVNEELDIRSTHYLDINHADIVARIDLTEWETNPESTRYLTFLKGRVGRKVADFFMDFLGASEGLNAKAQNRGLLQAVDDFAADAQLDKSERQNVRQQVYAYCNEQLQAGEEIELESLSKELAGVSEKSFQEFTAEQGYELEESFPADRSTLRQLTKFAGSGGGLTINFDAMLLGERVFWDPATDTLTIKGTPPNLRDQLQRRTSGGN.

This sequence belongs to the YejK family.

It localises to the cytoplasm. The protein localises to the nucleoid. The polypeptide is Nucleoid-associated protein KPN78578_25800 (Klebsiella pneumoniae subsp. pneumoniae (strain ATCC 700721 / MGH 78578)).